Consider the following 690-residue polypeptide: Protein arginine N-methyltransferase 7 (690 aa).

2 consecutive SAM-dependent MTase PRMT-type domains span residues 5–355 (FQDS…FSLW) and 364–690 (KEPL…EEEQ).

Belongs to the class I-like SAM-binding methyltransferase superfamily. Protein arginine N-methyltransferase family. PRMT7 subfamily.

Functionally, essential arginine methyltransferase that can both catalyze the formation of omega-N monomethylarginine (MMA) and symmetrical dimethylarginine (sDMA). Specifically mediates the symmetrical dimethylation of arginine residues in the small nuclear ribonucleoproteins SmD1 and SmD3. The protein is Protein arginine N-methyltransferase 7 (Art7) of Anopheles gambiae (African malaria mosquito).